The following is a 57-amino-acid chain: COP9 signalosome complex subunit 9 (57 aa).

It belongs to the CSN9 family. In terms of assembly, component of the CSN complex, probably composed of cops1, cops2, cops3, cops4, cops5, cops6, cops7, cops8 and cops9.

The protein resides in the nucleus. It localises to the cytoplasm. Its subcellular location is the nucleoplasm. Component of the COP9 signalosome complex (CSN), a complex involved in various cellular and developmental processes. The CSN complex is an essential regulator of the ubiquitin (Ubl) conjugation pathway by mediating the deneddylation of the cullin subunits of SCF-type E3 ligase complexes, leading to decrease the Ubl ligase activity. May play a role in cell proliferation. The polypeptide is COP9 signalosome complex subunit 9 (Xenopus laevis (African clawed frog)).